Reading from the N-terminus, the 138-residue chain is Acidic phospholipase A2 RV-7 (138 aa).

Residues methionine 1–glycine 16 form the signal peptide. 7 cysteine pairs are disulfide-bonded: cysteine 42–cysteine 131, cysteine 44–cysteine 60, cysteine 59–cysteine 111, cysteine 65–cysteine 138, cysteine 66–cysteine 104, cysteine 73–cysteine 97, and cysteine 91–cysteine 102. Residues tyrosine 43, glycine 45, and glycine 47 each coordinate Ca(2+). The active site involves histidine 63. Aspartate 64 is a Ca(2+) binding site. Aspartate 105 is an active-site residue.

It belongs to the phospholipase A2 family. Group II subfamily. D49 sub-subfamily. As to quaternary structure, heterodimer of a weakly toxic basic protein having phospholipase A2 activity (RV-4) and a non-toxic acidic protein which inhibits its enzymatic activity but potentiates its lethal potency and neurotoxicity (RV-7). The cofactor is Ca(2+). In terms of tissue distribution, expressed by the venom gland.

The protein resides in the secreted. The enzyme catalyses a 1,2-diacyl-sn-glycero-3-phosphocholine + H2O = a 1-acyl-sn-glycero-3-phosphocholine + a fatty acid + H(+). Its function is as follows. Heterodimer: RV-4/RV-7 targets the presynaptic sites of the neuromuscular junction. Monomer: snake venom phospholipase A2 (PLA2) RV-7 that has low enzymatic activity and is not toxic. It inhibits the enzymatic activity of RV-4 in vitro but potentiates its lethal potency and neurotoxicity. It may facilitate the specific binding of RV-4 to its presynaptic binding sites, probably by acting as a chaperone, minimizing distraction and destruction of RV-4 en route to the site of action by reducing non-specific binding to muscle and other organs. PLA2 catalyzes the calcium-dependent hydrolysis of the 2-acyl groups in 3-sn-phosphoglycerides. The sequence is that of Acidic phospholipase A2 RV-7 from Daboia siamensis (Eastern Russel's viper).